The sequence spans 432 residues: MEKLIILGAQWGDEGKGKIVDLLSEHFDITVRYQGGSNAGHTVVVNSQKFILHLLPTGILHEHVKGVIAQGMVVDLEVLHKEVKNLEEKGIYVKERLFISDRAHLVMPYHKLLDSLFEKKKGIGTTLRGIGPAYMFKYGRKGIRISDLKDEKRFYTLLEDNLDFVKNICEKVFCEKFDLDINQIYEEQLRYFEEFKENVVDLLRFFNTQKGSVLFEGAQGTLLDVDMGTYPYVTSSNASALGLSNGTGMPPKYFSDAFFLGVAKAYTTRVGEGPFPTELKGEEGEKLRELGGEYGSTTGRPRRCGWLDLVALKYAVQVNGLDGFVITKLDVLDTFDEVKVCVAYELDGEVIDYFPASYSELIRVKPVYKTLKGWKKSTKGAKDVSELPKEALDYVKFIEEYTGVPVVMLSTGPKRDEYIWLKEILRTRSGYS.

Residues 12-18 (GDEGKGK) and 40-42 (GHT) contribute to the GTP site. D13 functions as the Proton acceptor in the catalytic mechanism. The Mg(2+) site is built by D13 and G40. Residues 13–16 (DEGK), 38–41 (NAGH), T126, R140, Q219, T234, and R300 each bind IMP. The active-site Proton donor is H41. Residue 296–302 (STTGRPR) coordinates substrate. GTP-binding positions include R302, 328 to 330 (KLD), and 410 to 412 (STG).

It belongs to the adenylosuccinate synthetase family. Homodimer. It depends on Mg(2+) as a cofactor.

The protein localises to the cytoplasm. It catalyses the reaction IMP + L-aspartate + GTP = N(6)-(1,2-dicarboxyethyl)-AMP + GDP + phosphate + 2 H(+). The protein operates within purine metabolism; AMP biosynthesis via de novo pathway; AMP from IMP: step 1/2. Plays an important role in the de novo pathway of purine nucleotide biosynthesis. Catalyzes the first committed step in the biosynthesis of AMP from IMP. This is Adenylosuccinate synthetase from Aquifex aeolicus (strain VF5).